We begin with the raw amino-acid sequence, 331 residues long: Ornithine carbamoyltransferase (331 aa).

Carbamoyl phosphate contacts are provided by residues 55 to 58 (STRT), Gln-82, Arg-106, and 133 to 136 (HPTQ). Residues Asn-166, Asp-230, and 234–235 (SM) contribute to the L-ornithine site. Carbamoyl phosphate contacts are provided by residues 272 to 273 (CL) and Arg-317.

It belongs to the aspartate/ornithine carbamoyltransferase superfamily. OTCase family.

The protein resides in the cytoplasm. The enzyme catalyses carbamoyl phosphate + L-ornithine = L-citrulline + phosphate + H(+). The protein operates within amino-acid biosynthesis; L-arginine biosynthesis; L-arginine from L-ornithine and carbamoyl phosphate: step 1/3. Reversibly catalyzes the transfer of the carbamoyl group from carbamoyl phosphate (CP) to the N(epsilon) atom of ornithine (ORN) to produce L-citrulline. This chain is Ornithine carbamoyltransferase, found in Neisseria meningitidis serogroup C / serotype 2a (strain ATCC 700532 / DSM 15464 / FAM18).